The chain runs to 354 residues: Adenine deaminase (354 aa).

Zn(2+) contacts are provided by H20, H22, and H200. E203 (proton donor) is an active-site residue. A Zn(2+)-binding site is contributed by D281. D282 serves as a coordination point for substrate.

It belongs to the metallo-dependent hydrolases superfamily. Adenosine and AMP deaminases family. Adenine deaminase type 2 subfamily. Requires Zn(2+) as cofactor.

The enzyme catalyses adenine + H2O + H(+) = hypoxanthine + NH4(+). Functionally, catalyzes the hydrolytic deamination of adenine to hypoxanthine. Plays an important role in the purine salvage pathway and in nitrogen catabolism. In Cupriavidus metallidurans (strain ATCC 43123 / DSM 2839 / NBRC 102507 / CH34) (Ralstonia metallidurans), this protein is Adenine deaminase.